Reading from the N-terminus, the 193-residue chain is Ion-translocating oxidoreductase complex subunit A (193 aa).

Helical transmembrane passes span 5–25, 39–59, 72–92, 102–122, 134–154, and 171–191; these read ILLIISTALINNFVLVKFLGL, IGMGLATMFVLTVASLCAYLV, LRTLIFILVIAVVVQFTEMVI, LLGIFLPLITTNCAVLGVALL, VIYGFSASLGFSLVLVLFAAL, and SIALITAGLMSLAFMGFSGLV.

Belongs to the NqrDE/RnfAE family. As to quaternary structure, the complex is composed of six subunits: RnfA, RnfB, RnfC, RnfD, RnfE and RnfG.

It localises to the cell inner membrane. Its function is as follows. Part of a membrane-bound complex that couples electron transfer with translocation of ions across the membrane. The chain is Ion-translocating oxidoreductase complex subunit A from Histophilus somni (strain 2336) (Haemophilus somnus).